The following is a 275-amino-acid chain: Elongation factor Ts (275 aa).

The tract at residues 76–79 is involved in Mg(2+) ion dislocation from EF-Tu; sequence TDFV.

Belongs to the EF-Ts family.

The protein localises to the cytoplasm. Associates with the EF-Tu.GDP complex and induces the exchange of GDP to GTP. It remains bound to the aminoacyl-tRNA.EF-Tu.GTP complex up to the GTP hydrolysis stage on the ribosome. This chain is Elongation factor Ts, found in Corynebacterium glutamicum (strain ATCC 13032 / DSM 20300 / JCM 1318 / BCRC 11384 / CCUG 27702 / LMG 3730 / NBRC 12168 / NCIMB 10025 / NRRL B-2784 / 534).